Consider the following 126-residue polypeptide: VEGSLVQFETLIMKLAKRSGFFWYSFYGCYCGWGGHGLPQDPTDRCCFVHDCCYGKVTNCNPKTATYSYTEENDGIVCGGDDPCKKQVCECDRVAAMCFRDNKDTYDSDKYWKLPPQKCQEDPEPC.

The signal sequence occupies residues 1–3 (VEG). 7 disulfides stabilise this stretch: cysteine 29–cysteine 119, cysteine 31–cysteine 47, cysteine 46–cysteine 98, cysteine 52–cysteine 126, cysteine 53–cysteine 91, cysteine 60–cysteine 84, and cysteine 78–cysteine 89. Ca(2+) contacts are provided by tyrosine 30, glycine 32, and glycine 34. The active site involves histidine 50. A Ca(2+)-binding site is contributed by aspartate 51. Residue aspartate 92 is part of the active site.

In terms of assembly, homodimer. Ca(2+) serves as cofactor. In terms of tissue distribution, expressed by the venom gland.

The protein localises to the secreted. The enzyme catalyses a 1,2-diacyl-sn-glycero-3-phosphocholine + H2O = a 1-acyl-sn-glycero-3-phosphocholine + a fatty acid + H(+). Snake venom phospholipase that inhibits ADP-induced platelet aggregation. PLA2 catalyzes the calcium-dependent hydrolysis of the 2-acyl groups in 3-sn-phosphoglycerides. This chain is Acidic phospholipase A2 S1E6-b, found in Calloselasma rhodostoma (Malayan pit viper).